The chain runs to 157 residues: Ribosome maturation factor RimM (157 aa).

One can recognise a PRC barrel domain in the interval P89–V156.

Belongs to the RimM family. Binds ribosomal protein uS19.

It is found in the cytoplasm. Its function is as follows. An accessory protein needed during the final step in the assembly of 30S ribosomal subunit, possibly for assembly of the head region. Essential for efficient processing of 16S rRNA. May be needed both before and after RbfA during the maturation of 16S rRNA. It has affinity for free ribosomal 30S subunits but not for 70S ribosomes. The sequence is that of Ribosome maturation factor RimM from Rhizorhabdus wittichii (strain DSM 6014 / CCUG 31198 / JCM 15750 / NBRC 105917 / EY 4224 / RW1) (Sphingomonas wittichii).